Consider the following 166-residue polypeptide: Salivary acidic proline-rich phosphoprotein 1/2 (166 aa).

An N-terminal signal peptide occupies residues 1 to 16 (MLLILLSVALLAFSSA). The tract at residues 16–166 (AQDLDEDVSQ…QGPPQGQSPQ (151 aa)) is disordered. At glutamine 17 the chain carries Pyrrolidone carboxylic acid. The inhibits hydroxyapatite formation, binds to hydroxyapatite and calcium stretch occupies residues 17–46 (QDLDEDVSQEDVPLVISDGGDSEQFIDEER). The residue at position 24 (serine 24) is a Phosphoserine; by FAM20C. A Phosphoserine; alternate modification is found at serine 33. 2 O-linked (GlcA) serine; alternate glycosylation sites follow: serine 33 and serine 38. At serine 38 the chain carries Phosphoserine; by FAM20C; alternate. Composition is skewed to low complexity over residues 48-61 (GPPL…PSAG) and 68-82 (GPQQ…QQQQ). 2 stretches are compositionally biased toward pro residues: residues 83–111 (GPPP…PQGP) and 137–159 (GPPP…PQGP).

In terms of processing, proteolytically cleaved; PRP-2, PRP-1, PIF-S and Db-S yield PRP-4, PRP-3 (protein A), PIF-F and Db-F, respectively. Post-translationally, a hexuronic acid was shown to be linked to Ser-33 in about 40% of the polypeptides. Neither the structure of the carbohydrate (whether glucuronic acid or an isomer of), nor the linkage (whether a glycoside or an ester) has been definitely established.

It localises to the secreted. Its function is as follows. PRP's act as highly potent inhibitors of crystal growth of calcium phosphates. They provide a protective and reparative environment for dental enamel which is important for the integrity of the teeth. The protein is Salivary acidic proline-rich phosphoprotein 1/2 (PRH1) of Homo sapiens (Human).